Here is a 342-residue protein sequence, read N- to C-terminus: Polygalacturonase inhibitor 1 (342 aa).

An N-terminal signal peptide occupies residues 1-29 (MTQFNIPVTMSSSLSIILVILVSLRTALS). Cystine bridges form between Cys-32–Cys-62 and Cys-63–Cys-72. N-linked (GlcNAc...) asparagine glycosylation is present at Asn-64. 10 LRR repeats span residues 82–107 (NNLD…LPYL), 108–132 (NFLY…LTQL), 133–156 (HYLY…IKTL), 157–180 (VTLD…LPNL), 181–205 (GGIT…SKLF), 206–228 (TAMT…NLNL), 229–252 (AFVD…DKNT), 253–275 (KKIH…SKNL), 276–299 (NGLD…LKFL), and 300–319 (QSLN…GGNL). Asn-141 is a glycosylation site (N-linked (GlcNAc...) asparagine). Asn-303 carries N-linked (GlcNAc...) asparagine glycosylation. 2 disulfide bridges follow: Cys-310–Cys-332 and Cys-334–Cys-341.

It belongs to the polygalacturonase-inhibiting protein family.

The protein localises to the secreted. It localises to the cell wall. It is found in the membrane. Its function is as follows. Inhibitor of fungal polygalacturonase. It is an important factor for plant resistance to phytopathogenic fungi. Substrate preference is polygalacturonase (PG) from A.niger &gt;&gt; PG of F.oxysporum, A.solani or B.cinerea. Not active on PG from F.moniliforme. This chain is Polygalacturonase inhibitor 1 (PGIP1), found in Phaseolus vulgaris (Kidney bean).